Here is a 197-residue protein sequence, read N- to C-terminus: Shikimate kinase (197 aa).

Residue 26–31 (GSGKSR) participates in ATP binding. Position 30 (serine 30) interacts with Mg(2+). Substrate-binding residues include aspartate 48, arginine 72, and glycine 94. Arginine 132 contributes to the ATP binding site. Residue arginine 150 coordinates substrate.

Belongs to the shikimate kinase family. Monomer. It depends on Mg(2+) as a cofactor.

The protein localises to the cytoplasm. The enzyme catalyses shikimate + ATP = 3-phosphoshikimate + ADP + H(+). It functions in the pathway metabolic intermediate biosynthesis; chorismate biosynthesis; chorismate from D-erythrose 4-phosphate and phosphoenolpyruvate: step 5/7. Catalyzes the specific phosphorylation of the 3-hydroxyl group of shikimic acid using ATP as a cosubstrate. This is Shikimate kinase from Prochlorococcus marinus (strain MIT 9211).